Here is a 487-residue protein sequence, read N- to C-terminus: Homeobox protein homothorax (487 aa).

Disordered regions lie at residues 25–49 (YDPH…HMTH), 210–292 (DTTK…SSLN), and 333–369 (NFGT…QKKR). One can recognise an MEIS N-terminal domain in the interval 127-211 (GGDVCSSESF…IDLVIDERDT (85 aa)). Polar residues-rich tracts occupy residues 227–237 (NADSTSHTDGA) and 333–345 (NFGT…ASNA). The homeobox; TALE-type DNA-binding region spans 365–427 (NQKKRGIFPK…NARRRIVQPM (63 aa)).

Belongs to the TALE/MEIS homeobox family. In terms of assembly, interacts with exd; required for nuclear translocation of exd. In the wing disk, the expression is present in the regions corresponding to notum, wing hinge and ventral pleura. In the leg disk, the expression is in the periphery region, corresponding to the proximal segments of the legs. In the antennal disk, the expression is in all but the arista region. In the eye disk, the expression is strong in the anterior region surrounding the eye field, including the regions corresponding to ptilinum, ocellus and head capsules, and weak in the posterior and lateral margins of the eye disk. Expressed specifically in maturating inner photoreceptors of the DRA and maintained through adulthood.

It is found in the nucleus. Functionally, all isoforms are required for patterning of the embryonic cuticle. Acts with exd to delimit the eye field and prevent inappropriate eye development. Isoforms that carry the homeodomain are required for proper localization of chordotonal organs within the peripheral nervous system and antennal identity; required to activate antennal-specific genes, such as sal and to repress the leg-like expression of dac. Necessary for the nuclear localization of the essential HOX cofactor, extradenticle (exd). Both necessary and sufficient for inner photoreceptors to adopt the polarization-sensitive 'dorsal rim area' (DRA) of the eye fate instead of the color-sensitive default state. This occurs by increasing rhabdomere size and uncoupling R7-R8 communication to allow both cells to express the same opsin rather than different ones as required for color vision. In Drosophila melanogaster (Fruit fly), this protein is Homeobox protein homothorax.